The sequence spans 1357 residues: Mediator of RNA polymerase II transcription subunit 13 (1357 aa).

Disordered stretches follow at residues 356-391 (SCNY…GNGF) and 420-487 (DLWN…HRKE). Residues 435 to 451 (INPTSQQGDSARITSGS) show a composition bias toward polar residues.

This sequence belongs to the Mediator complex subunit 13 family. In terms of assembly, component of the SRB8-11 complex, which itself associates with the Mediator complex.

The protein resides in the nucleus. In terms of biological role, component of the SRB8-11 complex. The SRB8-11 complex is a regulatory module of the Mediator complex which is itself involved in regulation of basal and activated RNA polymerase II-dependent transcription. The SRB8-11 complex may be involved in the transcriptional repression of a subset of genes regulated by Mediator. It may inhibit the association of the Mediator complex with RNA polymerase II to form the holoenzyme complex. The protein is Mediator of RNA polymerase II transcription subunit 13 (SSN2) of Eremothecium gossypii (strain ATCC 10895 / CBS 109.51 / FGSC 9923 / NRRL Y-1056) (Yeast).